The following is a 202-amino-acid chain: Small ribosomal subunit protein uS4 (202 aa).

Residues 22–43 (TRKNARRAYPPGQHGQNRRKRS) form a disordered region. Residues 90 to 152 (MRLDNTVFRL…DKSRKLVQAN (63 aa)) form the S4 RNA-binding domain.

This sequence belongs to the universal ribosomal protein uS4 family. Part of the 30S ribosomal subunit. Contacts protein S5. The interaction surface between S4 and S5 is involved in control of translational fidelity.

One of the primary rRNA binding proteins, it binds directly to 16S rRNA where it nucleates assembly of the body of the 30S subunit. In terms of biological role, with S5 and S12 plays an important role in translational accuracy. This Gloeothece citriformis (strain PCC 7424) (Cyanothece sp. (strain PCC 7424)) protein is Small ribosomal subunit protein uS4.